A 264-amino-acid chain; its full sequence is Major prion protein (264 aa).

Residues 1 to 24 form the signal peptide; it reads MVKSHIGSWILVLFVAMWSDVGLC. Positions 25–241 are interaction with GRB2, ERI3 and SYN1; that stretch reads KKRPKPGGGW…ESQAYYQRGA (217 aa). The tract at residues 28 to 119 is disordered; it reads PKPGGGWNTG…WNKPSKPKTN (92 aa). 6 consecutive repeat copies span residues 54–62, 63–70, 71–78, 79–86, 87–94, and 95–103. Positions 54–103 are 6 X 8 AA tandem repeats of P-H-G-G-G-W-G-Q; sequence PQGGGGWGQPHGGGWGQPHGGGWGQPHGGGWGQPHGGGWGQPHGGGGWGQ. Residues 55 to 105 are compositionally biased toward gly residues; sequence QGGGGWGQPHGGGWGQPHGGGWGQPHGGGWGQPHGGGWGQPHGGGGWGQGG. Cu(2+)-binding residues include H72, G73, G74, H80, G81, G82, H88, G89, G90, H96, G98, and G99. C190 and C225 form a disulfide bridge. Residues N192 and N208 are each glycosylated (N-linked (GlcNAc...) asparagine). A241 carries the GPI-anchor amidated alanine lipid modification. A propeptide spans 242 to 264 (removed in mature form); sequence SVILFSSPPVILLISFLIFLIVG.

This sequence belongs to the prion family. Monomer and homodimer. Has a tendency to aggregate into amyloid fibrils containing a cross-beta spine, formed by a steric zipper of superposed beta-strands. Soluble oligomers may represent an intermediate stage on the path to fibril formation. Copper binding may promote oligomerization. Interacts with GRB2, APP, ERI3/PRNPIP and SYN1. Mislocalized cytosolically exposed PrP interacts with MGRN1; this interaction alters MGRN1 subcellular location and causes lysosomal enlargement. Interacts with KIAA1191.

It is found in the cell membrane. The protein localises to the golgi apparatus. In terms of biological role, its primary physiological function is unclear. Has cytoprotective activity against internal or environmental stresses. May play a role in neuronal development and synaptic plasticity. May be required for neuronal myelin sheath maintenance. May play a role in iron uptake and iron homeostasis. Soluble oligomers are toxic to cultured neuroblastoma cells and induce apoptosis (in vitro). Association with GPC1 (via its heparan sulfate chains) targets PRNP to lipid rafts. Also provides Cu(2+) or Zn(2+) for the ascorbate-mediated GPC1 deaminase degradation of its heparan sulfate side chains. The sequence is that of Major prion protein (PRNP) from Antilope cervicapra (Blackbuck).